The chain runs to 813 residues: Disintegrin and metalloproteinase domain-containing protein 33 (813 aa).

The N-terminal stretch at 1-29 is a signal peptide; the sequence is MGWRPRRARGTPLLLLLLLLLLWPVPGAG. A propeptide spanning residues 30–203 is cleaved from the precursor; the sequence is VLQGHIPGQP…PGGPQSRGRR (174 aa). The Extracellular segment spans residues 30–701; the sequence is VLQGHIPGQP…GPVQAENHDT (672 aa). An N-linked (GlcNAc...) asparagine glycan is attached at Asn109. Residues 131–138 carry the Cysteine switch motif; that stretch reads CTCSGMSG. Cys133 is a binding site for Zn(2+). Asn145 carries N-linked (GlcNAc...) asparagine glycosylation. Residues 184-205 are disordered; it reads PGNKAGMTSLPGGPQSRGRREA. A Peptidase M12B domain is found at 210–409; that stretch reads KYLELYIVAD…GGGACLSNAP (200 aa). N-linked (GlcNAc...) asparagine glycans are attached at residues Asn231 and Asn276. Disulfide bonds link Cys320–Cys404, Cys360–Cys388, and Cys361–Cys371. Residue His345 coordinates Zn(2+). The active site involves Glu346. Residues His349 and His355 each coordinate Zn(2+). The Disintegrin domain occupies 417–503; the sequence is PALCGNGFVE…HCPPDVYLLD (87 aa). Residue Asn448 is glycosylated (N-linked (GlcNAc...) asparagine). Cystine bridges form between Cys475–Cys495, Cys653–Cys663, Cys657–Cys669, and Cys671–Cys680. An EGF-like domain is found at 649–681; the sequence is ELQRCLTACHSHGVCNSNHNCHCAPGWAPPFCD. The chain crosses the membrane as a helical span at residues 702–722; it reads FLLAMLLSVLLPLLPGAGLAW. Over 723–813 the chain is Cytoplasmic; it reads CCYRLPGAHL…QVQMPRSCLW (91 aa). A disordered region spans residues 746 to 813; sequence SGPKDGPHRD…QVQMPRSCLW (68 aa). The segment covering 780-791 has biased composition (basic and acidic residues); sequence ENSHEPSSHPEK.

It depends on Zn(2+) as a cofactor. In terms of processing, the precursor is cleaved by a furin endopeptidase. Expressed in all tissues, except liver, with high expression in placenta, lung, spleen and veins.

The protein resides in the membrane. The chain is Disintegrin and metalloproteinase domain-containing protein 33 (ADAM33) from Homo sapiens (Human).